The sequence spans 60 residues: MICYSHKTPQNSATITCEEKTCYKFVTKLPGVILARGCGCPKKEIFRKSIHCCRSDKCNE.

Cystine bridges form between C3/C22, C17/C38, C40/C52, and C53/C58.

The protein belongs to the three-finger toxin family. Short-chain subfamily. Orphan group XI sub-subfamily. Expressed by the venom gland.

The protein localises to the secreted. The polypeptide is Toxin 4.9.6 (Dendroaspis viridis (Western green mamba)).